We begin with the raw amino-acid sequence, 462 residues long: Malonyl-coenzyme:anthocyanin 5-O-glucoside-6'''-O-malonyltransferase (462 aa).

Catalysis depends on proton acceptor residues His167 and Asp390.

The protein belongs to the plant acyltransferase family. In terms of tissue distribution, detected in petals and sepals, and at lower levels in bracts and red stems.

It catalyses the reaction pelargonidin 3-O-(6-O-[(E)-caffeoyl]-beta-D-glucoside) 5-O-beta-D-glucoside + malonyl-CoA = 4'''-demalonylsalvianin + CoA. It functions in the pathway pigment biosynthesis; anthocyanin biosynthesis. Its activity is regulated as follows. Completely inhibited by 10 mM p-coumaric acid, this inhibition is rapid, reversible and non-competitive. Completely inhibited by 0.1 mM Cu(2+), 0.1 mM Hg(2+) and 10 mM caffeic acid. Partially inhibited by 5 mM N-ethylmaleimide, 1 mM diethylpyrocarbonate and 1 mM acetyl-CoA. Functionally, catalyzes the transfer of a malonyl group from malonyl-CoA to the 6'''-hydroxyl group of the 5-glucosyl moiety of anthocyanins. Active towards bisdemalonylsalvianin (pelargonidin 3-O-(6-caffeoyl-beta-D-glucoside) 5-O-beta-D-glucoside) and shisonin, but not towards nodemalonylsalvianin, salvianin, pelargonidin 3,5-diglucoside and delphinidin 3,5-diglucoside. The protein is Malonyl-coenzyme:anthocyanin 5-O-glucoside-6'''-O-malonyltransferase of Salvia splendens (Scarlet sage).